A 301-amino-acid chain; its full sequence is Syntaxin-17 (301 aa).

Position 2 is an N-acetylserine (serine 2). At 2 to 227 (SEDEEKVKLR…KNLQKAAKYK (226 aa)) the chain is on the cytoplasmic side. Lysine 41 bears the N6-acetyllysine mark. Residues 49 to 128 (DKLHEEHINA…QVNDEELLQP (80 aa)) are a coiled coil. Tyrosine 156 bears the Phosphotyrosine; by ABL1 mark. The region spanning 161–223 (IPQDQNAAES…EEGTKNLQKA (63 aa)) is the t-SNARE coiled-coil homology domain. Residues 228–248 (LAALPVAGALIGGVVGGPIGL) form a helical membrane-spanning segment. Positions 228 to 274 (LAALPVAGALIGGVVGGPIGLLAGFKVAGIAAALGGGVLGFTGGKLI) are necessary and sufficient for localization to autophagosome. At 249-253 (LAGFK) the chain is on the lumenal side. The chain crosses the membrane as a helical span at residues 254-274 (VAGIAAALGGGVLGFTGGKLI). Over 275–301 (QRRKQKMMEKLTSSCPDLPSQSDKKRS) the chain is Cytoplasmic. Position 288 is a phosphoserine (serine 288). The short motif at 298-301 (KKRS) is the Endoplasmic reticulum retention signal element.

The protein belongs to the syntaxin family. As to quaternary structure, forms a SNARE complex composed of VAMP8, SNAP29 and STX17 involved in fusion of autophagosome with lysosome. May interact with VTI1B. Probably interacts with BET1, SCFD1 and SEC22B. Interacts with PTPN2 and ABL1; involved in STX17 phosphorylation. Interacts with COPB1. Interacts with TMED9 and TMED10; the interaction is direct. Interacts with VAMP7. Interacts with RUBCNL/PACER; promoting targeting of RUBCNL/PACER to autophagosome. Interacts with VAMP8, SNAP29, VPS39 and VPS41; these interactions are increased in the absence of TMEM39A. Interacts with IRGM; promoting STX17 recruitment to autophagosomes. Interacts with ATG8 proteins GABARAP and MAP1LC3B. Interacts with RNF115; this interaction enhances STX17 stability which in turn promotes autophagosome maturation. Interacts with RAB39A (GTP-bound); the interaction promotes autophagosome-lysosome membrane fusion driven by STX17-SNAP29-VAMP8. Interacts with RAB39B; the interaction may promote a different fonction in autophagy as compared with RAB39A. Post-translationally, dephosphorylation by PTPN2; regulates exit from the endoplasmic reticulum. Phosphorylated at Tyr-156 probably by ABL1.

The protein localises to the endoplasmic reticulum membrane. It localises to the smooth endoplasmic reticulum membrane. Its subcellular location is the endoplasmic reticulum-Golgi intermediate compartment membrane. The protein resides in the cytoplasmic vesicle. It is found in the autophagosome membrane. The protein localises to the COPII-coated vesicle membrane. It localises to the cytoplasm. Its subcellular location is the cytosol. The protein resides in the mitochondrion membrane. It is found in the autolysosome membrane. In terms of biological role, SNAREs, soluble N-ethylmaleimide-sensitive factor-attachment protein receptors, are essential proteins for fusion of cellular membranes. SNAREs localized on opposing membranes assemble to form a trans-SNARE complex, an extended, parallel four alpha-helical bundle that drives membrane fusion. STX17 is a SNARE of the autophagosome involved in autophagy through the direct control of autophagosome membrane fusion with the lysosome membrane. May also play a role in the early secretory pathway where it may maintain the architecture of the endoplasmic reticulum-Golgi intermediate compartment/ERGIC and Golgi and/or regulate transport between the endoplasmic reticulum, the ERGIC and the Golgi. The chain is Syntaxin-17 from Mus musculus (Mouse).